A 205-amino-acid chain; its full sequence is Proteasome subunit beta type-3 (205 aa).

Ser2 is modified (N-acetylserine). Lys77 is modified (N6-acetyllysine).

The protein belongs to the peptidase T1B family. The 26S proteasome consists of a 20S proteasome core and two 19S regulatory subunits. The 20S proteasome core is a barrel-shaped complex made of 28 subunits that are arranged in four stacked rings. The two outer rings are each formed by seven alpha subunits, and the two inner rings are formed by seven beta subunits. The proteolytic activity is exerted by three beta-subunits PSMB5, PSMB6 and PSMB7. In terms of tissue distribution, detected in liver (at protein level).

The protein localises to the cytoplasm. Its subcellular location is the nucleus. In terms of biological role, non-catalytic component of the 20S core proteasome complex involved in the proteolytic degradation of most intracellular proteins. This complex plays numerous essential roles within the cell by associating with different regulatory particles. Associated with two 19S regulatory particles, forms the 26S proteasome and thus participates in the ATP-dependent degradation of ubiquitinated proteins. The 26S proteasome plays a key role in the maintenance of protein homeostasis by removing misfolded or damaged proteins that could impair cellular functions, and by removing proteins whose functions are no longer required. Associated with the PA200 or PA28, the 20S proteasome mediates ubiquitin-independent protein degradation. This type of proteolysis is required in several pathways including spermatogenesis (20S-PA200 complex) or generation of a subset of MHC class I-presented antigenic peptides (20S-PA28 complex). This is Proteasome subunit beta type-3 (Psmb3) from Mus musculus (Mouse).